We begin with the raw amino-acid sequence, 322 residues long: Outer membrane protein assembly factor BamC (322 aa).

A signal peptide spans 1-22; it reads MISLLAVAVLAGCSNPETRSQA.

Belongs to the BamC family. As to quaternary structure, part of the Bam complex.

Its subcellular location is the cell outer membrane. Functionally, part of the outer membrane protein assembly complex, which is involved in assembly and insertion of beta-barrel proteins into the outer membrane. This chain is Outer membrane protein assembly factor BamC, found in Oceanimonas sp. (strain GK1 / IBRC-M 10197).